A 124-amino-acid chain; its full sequence is Small ribosomal subunit protein uS12 (124 aa).

Asp-89 is subject to 3-methylthioaspartic acid.

It belongs to the universal ribosomal protein uS12 family. Part of the 30S ribosomal subunit. Contacts proteins S8 and S17. May interact with IF1 in the 30S initiation complex.

With S4 and S5 plays an important role in translational accuracy. In terms of biological role, interacts with and stabilizes bases of the 16S rRNA that are involved in tRNA selection in the A site and with the mRNA backbone. Located at the interface of the 30S and 50S subunits, it traverses the body of the 30S subunit contacting proteins on the other side and probably holding the rRNA structure together. The combined cluster of proteins S8, S12 and S17 appears to hold together the shoulder and platform of the 30S subunit. The polypeptide is Small ribosomal subunit protein uS12 (Buchnera aphidicola subsp. Acyrthosiphon pisum (strain 5A)).